A 145-amino-acid chain; its full sequence is Hemoglobin fetal subunit beta (145 aa).

The Globin domain occupies Met-1–His-145. Positions 62 and 91 each coordinate heme b.

The protein belongs to the globin family. As to quaternary structure, heterotetramer of two alpha chains and two beta chains.

The chain is Hemoglobin fetal subunit beta from Ovis aries (Sheep).